The sequence spans 195 residues: MAQEKMKLGFKSLPSSTTADGNILRRVNSAPLINGLGFNSQVLQADMLRIRTNRTTFRNRRSLLLPPPPFHGSISRLHQIKQEEAMDLINRETMSEWKLQSEIQISHSWEEGLKLVKWHFNINQKRFSKAQPTCFLLILPNCQKIMCIYFQLLLMETTAMLDLLVIRQLKSALSQTLLCHLLILVLICSSRQTFN.

It belongs to the FAM122 family.

The protein is PABIR family member 1 of Homo sapiens (Human).